Here is a 311-residue protein sequence, read N- to C-terminus: Glycosyltransferase 6 domain-containing protein 1 (311 aa).

The Cytoplasmic portion of the chain corresponds to 1–5 (MKAKG). The helical; Signal-anchor for type II membrane protein transmembrane segment at 6–26 (RILLLTSCLFLLLLLLAKIHL) threads the bilayer. The Lumenal segment spans residues 27-311 (RNHQEEELPL…KVAHYPTDDL (285 aa)). N-linked (GlcNAc...) asparagine glycosylation occurs at Asn77. Residues 85–90 (FAVSSF), 176–178 (SVN), and 198–201 (HAWW) contribute to the substrate site. The Nucleophile role is filled by Glu266.

It belongs to the glycosyltransferase 6 family. The cofactor is Mn(2+).

Its subcellular location is the membrane. This is Glycosyltransferase 6 domain-containing protein 1 (Glt6d1) from Rattus norvegicus (Rat).